Here is a 534-residue protein sequence, read N- to C-terminus: Blue-light-activated protein (534 aa).

The region spanning 20-93 (GKDIFFAAVE…QSIRDAIDQR (74 aa)) is the PAS domain. C70 carries the post-translational modification S-4a-FMN cysteine. In terms of domain architecture, PAC spans 94-148 (VDISTEILNYRKDGSSFWNALFISPVYNDAGELIYFFASQLDISRRRDAEEALRQ). Residues 161 to 390 (GIAHDFNNLL…TLRLYFPVDE (230 aa)) form the Histidine kinase domain. H164 is subject to Phosphohistidine; by autocatalysis. Residues 411–527 (RILIVEDRPD…DLARKVRQVL (117 aa)) enclose the Response regulatory domain. D461 carries the post-translational modification 4-aspartylphosphate.

In terms of processing, FMN binds covalently to cysteine after exposure to blue light and this bond is spontaneously broken in the dark.

The catalysed reaction is ATP + protein L-histidine = ADP + protein N-phospho-L-histidine.. Photosensitive kinase and response regulator that is involved in increased bacterial virulence upon exposure to light. The chain is Blue-light-activated protein from Pseudomonas syringae pv. syringae (strain B728a).